The primary structure comprises 294 residues: 4-hydroxy-tetrahydrodipicolinate synthase (294 aa).

Pyruvate is bound at residue T45. The active-site Proton donor/acceptor is the Y133. K161 acts as the Schiff-base intermediate with substrate in catalysis. I203 is a pyruvate binding site.

Belongs to the DapA family. In terms of assembly, homotetramer; dimer of dimers.

The protein localises to the cytoplasm. The enzyme catalyses L-aspartate 4-semialdehyde + pyruvate = (2S,4S)-4-hydroxy-2,3,4,5-tetrahydrodipicolinate + H2O + H(+). It functions in the pathway amino-acid biosynthesis; L-lysine biosynthesis via DAP pathway; (S)-tetrahydrodipicolinate from L-aspartate: step 3/4. In terms of biological role, catalyzes the condensation of (S)-aspartate-beta-semialdehyde [(S)-ASA] and pyruvate to 4-hydroxy-tetrahydrodipicolinate (HTPA). This chain is 4-hydroxy-tetrahydrodipicolinate synthase, found in Buchnera aphidicola subsp. Acyrthosiphon pisum (strain 5A).